A 386-amino-acid chain; its full sequence is Phosphoglycerate kinase (386 aa).

Substrate is bound by residues 21–23 (DLN), Arg-36, 59–62 (HLGR), Arg-113, and Arg-146. Residues Lys-197, Glu-314, and 340–343 (GGDT) contribute to the ATP site.

This sequence belongs to the phosphoglycerate kinase family. Monomer.

The protein resides in the cytoplasm. The catalysed reaction is (2R)-3-phosphoglycerate + ATP = (2R)-3-phospho-glyceroyl phosphate + ADP. The protein operates within carbohydrate degradation; glycolysis; pyruvate from D-glyceraldehyde 3-phosphate: step 2/5. This Azotobacter vinelandii (strain DJ / ATCC BAA-1303) protein is Phosphoglycerate kinase.